Reading from the N-terminus, the 243-residue chain is DNA repair protein RecO (243 aa).

This sequence belongs to the RecO family.

Involved in DNA repair and RecF pathway recombination. This Serratia proteamaculans (strain 568) protein is DNA repair protein RecO.